The following is a 330-amino-acid chain: tRNA N6-adenosine threonylcarbamoyltransferase (330 aa).

Residues H110 and H114 each coordinate Fe cation. Residues 133-137 (LVSGG), D166, G179, and N268 each bind substrate. D296 is a binding site for Fe cation.

This sequence belongs to the KAE1 / TsaD family. It depends on Fe(2+) as a cofactor.

Its subcellular location is the cytoplasm. The enzyme catalyses L-threonylcarbamoyladenylate + adenosine(37) in tRNA = N(6)-L-threonylcarbamoyladenosine(37) in tRNA + AMP + H(+). Required for the formation of a threonylcarbamoyl group on adenosine at position 37 (t(6)A37) in tRNAs that read codons beginning with adenine. Is involved in the transfer of the threonylcarbamoyl moiety of threonylcarbamoyl-AMP (TC-AMP) to the N6 group of A37, together with TsaE and TsaB. TsaD likely plays a direct catalytic role in this reaction. The sequence is that of tRNA N6-adenosine threonylcarbamoyltransferase from Kosmotoga olearia (strain ATCC BAA-1733 / DSM 21960 / TBF 19.5.1).